The chain runs to 111 residues: Prothymosin alpha (111 aa).

The residue at position 1 (M1) is an N-acetylmethionine. The disordered stretch occupies residues 1 to 111 (MSDAAVDTSS…TKKQKTEEDD (111 aa)). The residue at position 2 (S2) is an N-acetylserine; in Prothymosin alpha, N-terminally processed. S2 is modified (phosphoserine). Residue T8 is modified to Phosphothreonine. Phosphoserine occurs at positions 9 and 10. Phosphothreonine occurs at positions 13 and 14. The segment covering 13–31 (TTKDLKEKKEVVEEAENGR) has biased composition (basic and acidic residues). K15 is modified (N6-acetyllysine; alternate). K15 carries the N6-succinyllysine; alternate modification. A compositionally biased stretch (acidic residues) spans 43–84 (ENGEQEADNEVDEEEEEGGEEEEEEEEGDGEEEDGDEDEEAE). Over residues 101-111 (DTKKQKTEEDD) the composition is skewed to basic and acidic residues. T102 carries the phosphothreonine modification. K103 is modified (N6-acetyllysine; alternate). Residue K103 forms a Glycyl lysine isopeptide (Lys-Gly) (interchain with G-Cter in SUMO2); alternate linkage. T107 carries the post-translational modification Phosphothreonine.

The protein belongs to the pro/parathymosin family. In terms of assembly, interacts with NUPR1; regulates apoptotic process. Post-translationally, covalently linked to a small RNA of about 20 nucleotides.

Its subcellular location is the nucleus. Prothymosin alpha may mediate immune function by conferring resistance to certain opportunistic infections. This chain is Prothymosin alpha (Ptma), found in Mus musculus (Mouse).